The primary structure comprises 140 residues: HTH-type transcriptional regulator LysM (140 aa).

In terms of domain architecture, HTH asnC-type spans valine 4–valine 67. A DNA-binding region (H-T-H motif) is located at residues tyrosine 23–glutamate 42.

Homotetramer.

It localises to the cytoplasm. It functions in the pathway amino-acid biosynthesis; L-lysine biosynthesis via AAA pathway [regulation]. Functionally, in the absence or at low concentrations of lysine, activates the biosynthesis of this amino acid via the alpha-aminoadipate (AAA) pathway. The sequence is that of HTH-type transcriptional regulator LysM (lysM) from Sulfurisphaera tokodaii (strain DSM 16993 / JCM 10545 / NBRC 100140 / 7) (Sulfolobus tokodaii).